The following is a 266-amino-acid chain: CAAX prenyl protease 2 (266 aa).

3 consecutive transmembrane segments (helical) span residues 1-21, 42-59, and 78-98; these read MGAGLVSACLPISYVLLVHLF, LLSNFVSIVVTAFYLRDY, and ITYPFILMNAFYLGQFVMMQI. Residues Glu-131 and His-164 each act as proton donor/acceptor in the active site. 3 helical membrane-spanning segments follow: residues 186–206, 210–230, and 239–259; these read GFQFCYTYLFGAFATWLQLTT, IVPIIAHAFCNAQGLPLWLEI, and RLTLYAAYSVGFAAFVHLLYT.

Belongs to the peptidase U48 family.

The protein resides in the endoplasmic reticulum membrane. It localises to the membrane. The catalysed reaction is Hydrolyzes the peptide bond -P2-(S-farnesyl or geranylgeranyl)C-P1'-P2'-P3'-COOH where P1' and P2' are amino acids with aliphatic sidechains and P3' is any C-terminal residue.. Its function is as follows. Protease involved in the processing of a variety of prenylated proteins containing the C-terminal CAAX motif, where C is a cysteine modified with an isoprenoid lipid, A is an aliphatic amino acid and X is any C-terminal amino acid. Proteolytically removes the C-terminal three residues of farnesylated and geranylated proteins, leaving the prenylated cysteine as the new C-terminus. The chain is CAAX prenyl protease 2 from Caenorhabditis elegans.